Consider the following 152-residue polypeptide: TOMM20-like protein 1 (152 aa).

Residues M1–R9 are Mitochondrial intermembrane-facing. The helical transmembrane segment at L10–L29 threads the bilayer. Over N30–D152 the chain is Cytoplasmic. Residues L43–W62 form a disordered region. A compositionally biased stretch (basic and acidic residues) spans R47–E56.

This sequence belongs to the Tom20 family.

The protein localises to the mitochondrion outer membrane. This chain is TOMM20-like protein 1 (TOMM20L), found in Homo sapiens (Human).